The sequence spans 1134 residues: ATP-dependent helicase/deoxyribonuclease subunit B (1134 aa).

8–15 (GRAGSGKS) contacts ATP. [4Fe-4S] cluster contacts are provided by Cys771, Cys1089, Cys1092, and Cys1098.

The protein belongs to the helicase family. AddB/RexB type 1 subfamily. Heterodimer of AddA and AddB. The cofactor is Mg(2+). [4Fe-4S] cluster serves as cofactor.

In terms of biological role, the heterodimer acts as both an ATP-dependent DNA helicase and an ATP-dependent, dual-direction single-stranded exonuclease. Recognizes the chi site generating a DNA molecule suitable for the initiation of homologous recombination. The AddB subunit has 5' -&gt; 3' nuclease activity but not helicase activity. This chain is ATP-dependent helicase/deoxyribonuclease subunit B, found in Clostridium novyi (strain NT).